The chain runs to 113 residues: Tyrosine-protein phosphatase 15 (113 aa).

A Tyrosine-protein phosphatase domain is found at 1-113 (WRMVYDNNVN…RSTGDGVALI (113 aa)).

This sequence belongs to the protein-tyrosine phosphatase family.

The catalysed reaction is O-phospho-L-tyrosyl-[protein] + H2O = L-tyrosyl-[protein] + phosphate. This Styela plicata (Wrinkled sea squirt) protein is Tyrosine-protein phosphatase 15 (STY-15).